Consider the following 354-residue polypeptide: Histidinol-phosphate aminotransferase (354 aa).

The segment covering 1–11 (MKSFLSDKAKS) has biased composition (basic and acidic residues). The disordered stretch occupies residues 1-33 (MKSFLSDKAKSIEPYTPGEQPKDKNYIKLNTNE). Residue K211 is modified to N6-(pyridoxal phosphate)lysine.

It belongs to the class-II pyridoxal-phosphate-dependent aminotransferase family. Histidinol-phosphate aminotransferase subfamily. Homodimer. The cofactor is pyridoxal 5'-phosphate.

The enzyme catalyses L-histidinol phosphate + 2-oxoglutarate = 3-(imidazol-4-yl)-2-oxopropyl phosphate + L-glutamate. Its pathway is amino-acid biosynthesis; L-histidine biosynthesis; L-histidine from 5-phospho-alpha-D-ribose 1-diphosphate: step 7/9. This Brachyspira hyodysenteriae (strain ATCC 49526 / WA1) protein is Histidinol-phosphate aminotransferase.